The primary structure comprises 339 residues: DNA-directed RNA polymerase subunit alpha (339 aa).

An alpha N-terminal domain (alpha-NTD) region spans residues methionine 1 to glutamate 233. Residues lysine 264 to phenylalanine 339 are alpha C-terminal domain (alpha-CTD).

This sequence belongs to the RNA polymerase alpha chain family. As to quaternary structure, in plastids the minimal PEP RNA polymerase catalytic core is composed of four subunits: alpha, beta, beta', and beta''. When a (nuclear-encoded) sigma factor is associated with the core the holoenzyme is formed, which can initiate transcription.

Its subcellular location is the plastid. It is found in the chloroplast. The enzyme catalyses RNA(n) + a ribonucleoside 5'-triphosphate = RNA(n+1) + diphosphate. Its function is as follows. DNA-dependent RNA polymerase catalyzes the transcription of DNA into RNA using the four ribonucleoside triphosphates as substrates. This Australopyrum velutinum (Mountain wheat-grass) protein is DNA-directed RNA polymerase subunit alpha.